A 111-amino-acid polypeptide reads, in one-letter code: Nucleoid-associated protein VF_1686 (111 aa).

Disordered stretches follow at residues 1-23 (MFGGKGGMGNLMKQAQQMQDRMQ) and 89-111 (TQKEKMASVTGGMQMPPGFKMPF).

The protein belongs to the YbaB/EbfC family. In terms of assembly, homodimer.

It is found in the cytoplasm. It localises to the nucleoid. Its function is as follows. Binds to DNA and alters its conformation. May be involved in regulation of gene expression, nucleoid organization and DNA protection. In Aliivibrio fischeri (strain ATCC 700601 / ES114) (Vibrio fischeri), this protein is Nucleoid-associated protein VF_1686.